A 122-amino-acid polypeptide reads, in one-letter code: uncharacterized protein (122 aa).

This is an uncharacterized protein from Schizosaccharomyces pombe (strain 972 / ATCC 24843) (Fission yeast).